The chain runs to 177 residues: Tubulin beta chain (177 aa).

The tract at residues 156 to 177 (YQDATAEEEGEFDEEEGDEEAA) is disordered. Acidic residues predominate over residues 160–177 (TAEEEGEFDEEEGDEEAA).

The protein belongs to the tubulin family. Dimer of alpha and beta chains. A typical microtubule is a hollow water-filled tube with an outer diameter of 25 nm and an inner diameter of 15 nM. Alpha-beta heterodimers associate head-to-tail to form protofilaments running lengthwise along the microtubule wall with the beta-tubulin subunit facing the microtubule plus end conferring a structural polarity. Microtubules usually have 13 protofilaments but different protofilament numbers can be found in some organisms and specialized cells. Requires Mg(2+) as cofactor.

Its subcellular location is the cytoplasm. It localises to the cytoskeleton. Its function is as follows. Tubulin is the major constituent of microtubules, a cylinder consisting of laterally associated linear protofilaments composed of alpha- and beta-tubulin heterodimers. Microtubules grow by the addition of GTP-tubulin dimers to the microtubule end, where a stabilizing cap forms. Below the cap, tubulin dimers are in GDP-bound state, owing to GTPase activity of alpha-tubulin. The sequence is that of Tubulin beta chain from Lytechinus pictus (Painted sea urchin).